Reading from the N-terminus, the 152-residue chain is 3-hydroxyacyl-[acyl-carrier-protein] dehydratase FabZ (152 aa).

H58 is a catalytic residue.

This sequence belongs to the thioester dehydratase family. FabZ subfamily.

The protein localises to the cytoplasm. The catalysed reaction is a (3R)-hydroxyacyl-[ACP] = a (2E)-enoyl-[ACP] + H2O. Its function is as follows. Involved in unsaturated fatty acids biosynthesis. Catalyzes the dehydration of short chain beta-hydroxyacyl-ACPs and long chain saturated and unsaturated beta-hydroxyacyl-ACPs. In Prochlorococcus marinus subsp. pastoris (strain CCMP1986 / NIES-2087 / MED4), this protein is 3-hydroxyacyl-[acyl-carrier-protein] dehydratase FabZ.